We begin with the raw amino-acid sequence, 356 residues long: tRNA-specific 2-thiouridylase MnmA (356 aa).

ATP is bound by residues 6–13 (AMSGGVDS) and Leu32. Cys101 (nucleophile) is an active-site residue. Cys101 and Cys193 are oxidised to a cystine. Residue Gly125 coordinates ATP. Positions 143–145 (KDQ) are interaction with tRNA. The Cysteine persulfide intermediate role is filled by Cys193.

It belongs to the MnmA/TRMU family.

The protein localises to the cytoplasm. It catalyses the reaction S-sulfanyl-L-cysteinyl-[protein] + uridine(34) in tRNA + AH2 + ATP = 2-thiouridine(34) in tRNA + L-cysteinyl-[protein] + A + AMP + diphosphate + H(+). Functionally, catalyzes the 2-thiolation of uridine at the wobble position (U34) of tRNA, leading to the formation of s(2)U34. The chain is tRNA-specific 2-thiouridylase MnmA from Mycobacteroides abscessus (strain ATCC 19977 / DSM 44196 / CCUG 20993 / CIP 104536 / JCM 13569 / NCTC 13031 / TMC 1543 / L948) (Mycobacterium abscessus).